Reading from the N-terminus, the 498-residue chain is Probable malate:quinone oxidoreductase 2 (498 aa).

The protein belongs to the MQO family. The cofactor is FAD.

It carries out the reaction (S)-malate + a quinone = a quinol + oxaloacetate. It participates in carbohydrate metabolism; tricarboxylic acid cycle; oxaloacetate from (S)-malate (quinone route): step 1/1. This chain is Probable malate:quinone oxidoreductase 2, found in Staphylococcus aureus (strain MW2).